Here is a 144-residue protein sequence, read N- to C-terminus: Large ribosomal subunit protein uL16 (144 aa).

The segment covering 1-14 (MLTPKRVKHRKQHR) has biased composition (basic residues). Residues 1–22 (MLTPKRVKHRKQHRPSLAGKAN) form a disordered region.

The protein belongs to the universal ribosomal protein uL16 family. In terms of assembly, part of the 50S ribosomal subunit.

In terms of biological role, binds 23S rRNA and is also seen to make contacts with the A and possibly P site tRNAs. The polypeptide is Large ribosomal subunit protein uL16 (Syntrophomonas wolfei subsp. wolfei (strain DSM 2245B / Goettingen)).